Reading from the N-terminus, the 179-residue chain is MKFKPNQTRTYDREGFKKRAACLCFRSEQEDEVLLVSSSRYPDQWIVPGGGVEPEEEPGGAAAREVYEEAGVKGKLGRLLGIFENQDRKHRTYVYVLTVTEILEDWEDSVNIGRKREWFKVEDAIKVLQCHKPVHAEYLERLKLGCSPTNGNSTVPSLPDNNALFVTAAPPSGVPSSIR.

Substrate-binding positions include R9, 17–19 (KKR), and 38–40 (SSR). Residues 17-143 (KKRAACLCFR…VHAEYLERLK (127 aa)) enclose the Nudix hydrolase domain. Mg(2+) is bound by residues G49 and E65. A Nudix box motif is present at residues 50–71 (GGVEPEEEPGGAAAREVYEEAG). The active-site Proton acceptor is E68. Position 69 (E69) interacts with Mg(2+). Substrate contacts are provided by residues 88 to 90 (RKH), R114, and K132.

This sequence belongs to the Nudix hydrolase family. DIPP subfamily. Requires Mg(2+) as cofactor. Mn(2+) serves as cofactor.

It localises to the cytoplasm. It carries out the reaction diphospho-myo-inositol polyphosphate + H2O = myo-inositol polyphosphate + phosphate.. It catalyses the reaction 5-diphospho-1D-myo-inositol 1,2,3,4,6-pentakisphosphate + H2O = 1D-myo-inositol hexakisphosphate + phosphate + H(+). The enzyme catalyses 3,5-bis(diphospho)-1D-myo-inositol 1,2,4,6-tetrakisphosphate + H2O = 3-diphospho-1D-myo-inositol 1,2,4,5,6-pentakisphosphate + phosphate + 2 H(+). The catalysed reaction is 5-diphospho-1D-myo-inositol 1,3,4,6-tetrakisphosphate + H2O = 1D-myo-inositol 1,3,4,5,6-pentakisphosphate + phosphate + H(+). It carries out the reaction P(1),P(6)-bis(5'-adenosyl) hexaphosphate + H2O = 2 ATP + 2 H(+). It catalyses the reaction P(1),P(5)-bis(5'-adenosyl) pentaphosphate + H2O = ADP + ATP + 2 H(+). The enzyme catalyses 5-phospho-alpha-D-ribose 1-diphosphate + H2O = alpha-D-ribose 1,5-bisphosphate + phosphate + H(+). In terms of biological role, cleaves the beta-phosphate from diphosphoinositol polyphosphates such as PP-InsP5 (diphosphoinositol pentakisphosphate), PP-InsP4 (diphosphoinositol tetrakisphosphate) and [PP]2-InsP4 (bisdiphosphoinositol tetrakisphosphate), suggesting that it may play a role in signal transduction. Diadenosine polyphosphates, particularly Ap6A (P(1),P(6)-bis(5a-adenosyl) hexaphosphate) and Ap5A (P(1),P(5)-bis(5'-adenosyl) pentaphosphate) are downstream effectors of a signaling cascade that regulates cardiac KATP channels, can also be substrates, although with lower preference than the diphosphoinositol polyphosphates. Can also catalyze the hydrolysis of 5-phosphoribose 1-diphosphate, generating the glycolytic activator ribose 1,5-bisphosphate. Does not play a role in U8 snoRNA decapping activity. Binds U8 snoRNA. This Rattus norvegicus (Rat) protein is Diphosphoinositol polyphosphate phosphohydrolase 2.